The following is a 305-amino-acid chain: Aurora/IPL1-related protein kinase 2 (305 aa).

Residues 30 to 280 (FEIGRPLGKG…LEQVKEHYWI (251 aa)) enclose the Protein kinase domain. Residues 36 to 44 (LGKGKFGSV) and Lys-59 each bind ATP. Residue Asp-153 is the Proton acceptor of the active site.

It belongs to the protein kinase superfamily. Ser/Thr protein kinase family. Aurora subfamily. In terms of assembly, component of the CPC complex which consists of icp-1; csc-1; bir-1 and air-2. Within the complex, interacts with icp-1; csc-1 and bir-1. Interacts with zen-4. Interacts with tlk-1 and bmk-1. Phosphorylated. Increased phosphorylation upon chromatin obstructions at anaphase.

Its subcellular location is the cytoplasm. The protein localises to the cytoskeleton. It localises to the chromosome. It is found in the midbody. The protein resides in the spindle. The enzyme catalyses L-seryl-[protein] + ATP = O-phospho-L-seryl-[protein] + ADP + H(+). The catalysed reaction is L-threonyl-[protein] + ATP = O-phospho-L-threonyl-[protein] + ADP + H(+). Serine/threonine-protein kinase component of the chromosomal passenger complex (CPC), a complex that acts as a key regulator of chromosome segregation and cytokinesis. The CPC complex has essential functions at the centromere in ensuring correct chromosome alignment and segregation. Required for histone H3 phosphorylation during segregation of homologous chromosomes in meiosis and mitosis. Required for histone H3 'Ser-10' phosphorylation. Phosphorylates tlk-1 at 'Ser-634', which enhances its activity. Phosphorylates zen-4 at 'Ser-680'. Required for the recruitment of bub-1 to the ring-shaped domain between chromosomes during meiotic anaphase I. Also required for the localization of the condensin I complex subunit smc-4 to mitotic chromosomes. Acts at the spindle midzone and the midbody to prevent cleavage furrow regression upon chromatin obstructions during cytokinesis. In Caenorhabditis elegans, this protein is Aurora/IPL1-related protein kinase 2.